The sequence spans 147 residues: Protein-export protein SecB 2 (147 aa).

The protein belongs to the SecB family. In terms of assembly, homotetramer, a dimer of dimers. One homotetramer interacts with 1 SecA dimer.

The protein resides in the cytoplasm. In terms of biological role, one of the proteins required for the normal export of preproteins out of the cell cytoplasm. It is a molecular chaperone that binds to a subset of precursor proteins, maintaining them in a translocation-competent state. It also specifically binds to its receptor SecA. This is Protein-export protein SecB 2 from Francisella tularensis subsp. holarctica (strain FTNF002-00 / FTA).